A 301-amino-acid chain; its full sequence is Phosphoribosylaminoimidazole-succinocarboxamide synthase (301 aa).

Belongs to the SAICAR synthetase family.

The enzyme catalyses 5-amino-1-(5-phospho-D-ribosyl)imidazole-4-carboxylate + L-aspartate + ATP = (2S)-2-[5-amino-1-(5-phospho-beta-D-ribosyl)imidazole-4-carboxamido]succinate + ADP + phosphate + 2 H(+). It functions in the pathway purine metabolism; IMP biosynthesis via de novo pathway; 5-amino-1-(5-phospho-D-ribosyl)imidazole-4-carboxamide from 5-amino-1-(5-phospho-D-ribosyl)imidazole-4-carboxylate: step 1/2. This Syntrophobacter fumaroxidans (strain DSM 10017 / MPOB) protein is Phosphoribosylaminoimidazole-succinocarboxamide synthase.